The primary structure comprises 140 residues: MKIHAILVVAFLVLMKTAVSQDNNPLEHCRDVFVSFMPCMGFVEGIFQQPSPDCCRGVTHLNNVVKFTSPGSRNRQDSGETERVCLCIEIMGNANHLPFLPAAINNLPLRCSLTLSFPISVDMDCSQFRNTKNPDVEKLN.

The first 20 residues, Met-1–Ser-20, serve as a signal peptide directing secretion. 4 disulfides stabilise this stretch: Cys-29-Cys-87, Cys-39-Cys-54, Cys-55-Cys-111, and Cys-85-Cys-125.

Belongs to the plant LTP family. As to expression, tapetum-specific. Also present in pollen.

It is found in the endoplasmic reticulum lumen. This is Protein ARABIDOPSIS THALIANA ANTHER 7 from Arabidopsis thaliana (Mouse-ear cress).